The primary structure comprises 467 residues: Translation initiation factor eIF2B subunit delta (467 aa).

The segment at 1 to 106 (MGFSAEQAKK…QNPQNSPETD (106 aa)) is disordered. Residues Ser16, Ser19, Ser21, and Ser23 each carry the phosphoserine modification. Residues 16–37 (SPVSESSSVGGTSPATASSVVS) show a composition bias toward polar residues. Thr27 carries the post-translational modification Phosphothreonine. Ser28 and Ser37 each carry phosphoserine. The segment covering 51–61 (LKKARKQASRR) has biased composition (basic residues). Over residues 84 to 102 (PNKNSNQQKKASKQNPQNS) the composition is skewed to low complexity.

It belongs to the eIF-2B alpha/beta/delta subunits family. In terms of assembly, component of the translation initiation factor 2B (eIF2B) complex which is a heterodecamer of two sets of five different subunits: alpha, beta, gamma, delta and epsilon. Subunits alpha, beta and delta comprise a regulatory subcomplex and subunits epsilon and gamma comprise a catalytic subcomplex. Within the complex, the hexameric regulatory complex resides at the center, with the two heterodimeric catalytic subcomplexes bound on opposite sides.

The protein localises to the cytoplasm. Its subcellular location is the cytosol. Its function is as follows. Acts as a component of the translation initiation factor 2B (eIF2B) complex, which catalyzes the exchange of GDP for GTP on the eukaryotic initiation factor 2 (eIF2) complex gamma subunit. Its guanine nucleotide exchange factor activity is repressed when bound to eIF2 complex phosphorylated on the alpha subunit, thereby limiting the amount of methionyl-initiator methionine tRNA available to the ribosome and consequently global translation is repressed. In Schizosaccharomyces pombe (strain 972 / ATCC 24843) (Fission yeast), this protein is Translation initiation factor eIF2B subunit delta (tif224).